A 356-amino-acid chain; its full sequence is Protein pelota homolog (356 aa).

It belongs to the eukaryotic release factor 1 family. Pelota subfamily. In terms of assembly, monomer. It depends on a divalent metal cation as a cofactor.

The protein localises to the cytoplasm. May function in recognizing stalled ribosomes, interact with stem-loop structures in stalled mRNA molecules, and effect endonucleolytic cleavage of the mRNA. May play a role in the release non-functional ribosomes and degradation of damaged mRNAs. Has endoribonuclease activity. The polypeptide is Protein pelota homolog (Pyrococcus horikoshii (strain ATCC 700860 / DSM 12428 / JCM 9974 / NBRC 100139 / OT-3)).